The primary structure comprises 456 residues: MNLDIHCEQLSDARWTELLPLLQQYEVVRLDDCGLTEEHCKDIGSALRANPSLTELCLRTNELGDAGVHLVLQGLQSPTCKIQKLSLQNCSLTEAGCGVLPSTLRSLPTLRELHLSDNPLGDAGLRLLCEGLLDPQCHLEKLQLEYCRLTAASCEPLASVLRATRALKELTVSNNDIGEAGARVLGQGLADSACQLETLRLENCGLTPANCKDLCGIVASQASLRELDLGSNGLGDAGIAELCPGLLSPASRLKTLWLWECDITASGCRDLCRVLQAKETLKELSLAGNKLGDEGARLLCESLLQPGCQLESLWVKSCSLTAACCQHVSLMLTQNKHLLELQLSSNKLGDSGIQELCQALSQPGTTLRVLCLGDCEVTNSGCSSLASLLLANRSLRELDLSNNCVGDPGVLQLLGSLEQPGCALEQLVLYDTYWTEEVEDRLQALEGSKPGLRVIS.

An N-acetylmethionine modification is found at Met-1. LRR repeat units lie at residues 15–43 (WTEL…CKDI), 44–71 (GSAL…VHLV), 72–100 (LQGL…CGVL), 101–128 (PSTL…LRLL), 129–157 (CEGL…CEPL), 158–185 (ASVL…ARVL), 186–214 (GQGL…CKDL), 215–242 (CGIV…IAEL), 243–271 (CPGL…CRDL), 272–299 (CRVL…ARLL), 300–328 (CESL…CQHV), 329–356 (SLML…IQEL), 357–385 (CQAL…CSSL), 386–413 (ASLL…VLQL), and 414–442 (LGSL…EDRL). Ser-86 bears the Phosphoserine mark.

As to quaternary structure, forms high-affinity heterodimers with RNASE1, ANG and RNASE2.

It localises to the cytoplasm. The protein localises to the nucleus. In terms of biological role, ribonuclease inhibitor which inhibits RNASE1, RNASE2 and angiogenin (ANG). May play a role in redox homeostasis. Required to inhibit the cytotoxic tRNA ribonuclease activity of ANG in the cytoplasm in absence of stress. Relocates to the nucleus in response to stress, relieving inhibition of ANG in the cytoplasm, and inhibiting the angiogenic activity of ANG in the nucleus. In Sus scrofa (Pig), this protein is Ribonuclease inhibitor (RNH1).